We begin with the raw amino-acid sequence, 101 residues long: Small ribosomal subunit protein uS14m (101 aa).

Belongs to the universal ribosomal protein uS14 family. Component of the mitochondrial ribosome small subunit (28S) which comprises a 12S rRNA and about 30 distinct proteins. Interacts with LIAT1.

The protein localises to the mitochondrion. The protein is Small ribosomal subunit protein uS14m (mrps14) of Dictyostelium discoideum (Social amoeba).